The primary structure comprises 215 residues: Inositol diphosphatase DSP1 (215 aa).

One can recognise a Tyrosine-protein phosphatase domain in the interval 58–209; it reads NFSMVDNGIF…VSSFSHIPMS (152 aa). Residues 114–126 form a WPD loop important for active site topology region; it reads FGIEGNKEPFVNI. The 1D-myo-inositol hexakisphosphate site is built by Asn125, Ile126, His129, and Lys130. The active-site Phosphocysteine intermediate is Cys150.

This sequence belongs to the protein-tyrosine phosphatase family. Atypical dual-specificity phosphatase Siw14-like subfamily. In terms of assembly, homodimer and homohexamer; behaves as a monomer in solution. Highly expressed in siliques and at lower levels in roots, leaves and flowers.

The enzyme catalyses 5-diphospho-1D-myo-inositol 1,2,3,4,6-pentakisphosphate + H2O = 1D-myo-inositol hexakisphosphate + phosphate + H(+). It carries out the reaction 1,5-bis(diphospho)-1D-myo-inositol 2,3,4,6-tetrakisphosphate + H2O = 1-diphospho-1D-myo-inositol 2,3,4,5,6-pentakisphosphate + phosphate + 2 H(+). It catalyses the reaction 3,5-bis(diphospho)-1D-myo-inositol 1,2,4,6-tetrakisphosphate + H2O = 3-diphospho-1D-myo-inositol 1,2,4,5,6-pentakisphosphate + phosphate + 2 H(+). The catalysed reaction is 6-diphospho-1D-myo-inositol pentakisphosphate + H2O = 1D-myo-inositol hexakisphosphate + phosphate + H(+). The enzyme catalyses 5-diphospho-1D-myo-inositol 1,3,4,6-tetrakisphosphate + H2O = 1D-myo-inositol 1,3,4,5,6-pentakisphosphate + phosphate + H(+). Inhibited by manganese, calcium and zinc ions but not magnesium ions. Its function is as follows. Cleaves the beta-phosphate at the 5-position of soluble inositol pyrophosphates. Has highest activity on 5-diphosphoinositol 1,2,3,4,6-pentakisphosphate (5-InsP(7)), 1,5-bis-diphosphoinositol 2,3,4,6-tetrakisphosphate (1,5-InsP(8)) and 3,5-InsP(8), but has weak activity against 1-diphosphoinositol 2,3,4,5,6-pentakisphosphate (1-InsP(7)). Dephosphorylates the phosphoinositides PI(3,4,5)P3, PI(3,5)P2, but not PI(3)P, PI(3,4)P2 or PI(4,5)P2. Possesses phosphotyrosine phosphatase activity in vitro, and can hydrolyze para-nitrophenyl phosphate, O-methylfluorescein phosphate, polyphosphate and ATP. The sequence is that of Inositol diphosphatase DSP1 from Arabidopsis thaliana (Mouse-ear cress).